A 1186-amino-acid polypeptide reads, in one-letter code: Trafficking protein particle complex II-specific subunit 120 homolog (1186 aa).

2 disordered regions span residues 777–824 (PTDS…EKES) and 964–984 (TKDPPPGSPSSSRNPSFSEKN). Residues 779 to 792 (DSDNTMSSGRNAAG) show a composition bias toward polar residues. S971 carries the post-translational modification Phosphoserine. Over residues 972 to 981 (PSSSRNPSFS) the composition is skewed to low complexity.

It belongs to the TRS120 family. Part of the multisubunit TRAPP (transport protein particle) II complex composed of BET3, BET5, TRS20, TRS23, TRS31, TRS33, TRS65, TRS85, TRS120 and TRS130. Expressed in roots, leaves, stems and flowers.

It localises to the golgi apparatus. The protein resides in the trans-Golgi network. It is found in the early endosome. In terms of biological role, specific subunit of the TRAPP II complex, a highly conserved vesicle tethering complex that is required for the proper transport of proteins in post-Golgi trafficking pathways to the growing cell plate in mitotic active cells. Required for the polarized and selective transport of PIN2 and probably PIN1 to the plasma membrane. Not required for ER-to-Golgi as well as biosynthetic and endocytic vacuolar transport. The protein is Trafficking protein particle complex II-specific subunit 120 homolog of Arabidopsis thaliana (Mouse-ear cress).